A 520-amino-acid chain; its full sequence is MSSKCDVVVVGGGISGMAAAKLLHDSGLNVIVLEARDRVGGRTYTVRNQQVKYVDLGGSYVGPTQNRILRLSKELGLETYKVNEVERLIHYVKGKSYPFRGPLPPVRNPITFLDLNNLWRTVDDMGREIPSDAPWKAPLAEQWDQMTMKELLDKLCWTESSKQLATLFVNLCVTAETHEVSALWFLWYVKQCGGTTRIISTTNGGQERKFVGGSGQVTERIKDLLGDRVKLERPVVHIDQTGENVLVETLNHEVYEAKYVISAIPPVLGMKIHFSPPLPMMRNQLITRVPLGSVIKCIVYYKEPFWRHKDYCGSMIIEGEEAPIAYTLDDSKPDGSCAAIIGFILAHKARKLARLTKEERLKKLCDLYAKVLGSKEALNPVHYEEKNWCEEQYSAGCYTTYFPPGIMTQYGRVLRQPVGRIYFAGTETATHWSGYMEGAVEAGERAAREILHAMGKIPEDEIWQSEPESVDVPAKPITTTFLERHLPSVPGLLRLIGLTAIFSATALGYLAHKRGLLVRV.

An N-acetylserine modification is found at serine 2. At 2-489 the chain is on the cytoplasmic side; that stretch reads SSKCDVVVVG…TFLERHLPSV (488 aa). Lysine 52 bears the N6-acetyllysine mark. At cysteine 397 the chain carries S-8alpha-FAD cysteine. A helical; Anchor for type IV membrane protein transmembrane segment spans residues 490–516; that stretch reads PGLLRLIGLTAIFSATALGYLAHKRGL. Topologically, residues 517 to 520 are mitochondrial intermembrane; sequence LVRV.

This sequence belongs to the flavin monoamine oxidase family. Monomer, homo- or heterodimer (containing two subunits of similar size). Each subunit contains a covalently bound flavin. Enzymatically active as monomer. The cofactor is FAD.

Its subcellular location is the mitochondrion outer membrane. The enzyme catalyses a secondary aliphatic amine + O2 + H2O = a primary amine + an aldehyde + H2O2. The catalysed reaction is (R)-adrenaline + O2 + H2O = (R)-3,4-dihydroxymandelaldehyde + methylamine + H2O2. It carries out the reaction a primary methyl amine + O2 + H2O = an aldehyde + H2O2 + NH4(+). It catalyses the reaction benzylamine + O2 + H2O = benzaldehyde + H2O2 + NH4(+). The enzyme catalyses dopamine + O2 + H2O = 3,4-dihydroxyphenylacetaldehyde + H2O2 + NH4(+). The catalysed reaction is tyramine + O2 + H2O = (4-hydroxyphenyl)acetaldehyde + H2O2 + NH4(+). It carries out the reaction (R)-noradrenaline + O2 + H2O = (R)-3,4-dihydroxymandelaldehyde + H2O2 + NH4(+). It catalyses the reaction 2-phenylethylamine + O2 + H2O = 2-phenylacetaldehyde + H2O2 + NH4(+). The enzyme catalyses N-acetylputrescine + O2 + H2O = 4-acetamidobutanal + H2O2 + NH4(+). Its function is as follows. Catalyzes the oxidative deamination of primary and some secondary amines such as neurotransmitters, and exogenous amines including the tertiary amine, neurotoxin 1-methyl-4-phenyl-1,2,3,6-tetrahydropyridine (MPTP), with concomitant reduction of oxygen to hydrogen peroxide and participates in the metabolism of neuroactive and vasoactive amines in the central nervous system and peripheral tissues. Preferentially degrades benzylamine and phenylethylamine. The protein is Amine oxidase [flavin-containing] B of Sus scrofa (Pig).